A 954-amino-acid polypeptide reads, in one-letter code: Valine--tRNA ligase (954 aa).

Residues 48 to 58 (PNVTGSLHMGH) carry the 'HIGH' region motif. A 'KMSKS' region motif is present at residues 560-564 (KMSKS). Residue K563 participates in ATP binding. Residues 886–954 (INKDTELARL…RAQYLSIENL (69 aa)) adopt a coiled-coil conformation.

This sequence belongs to the class-I aminoacyl-tRNA synthetase family. ValS type 1 subfamily. Monomer.

The protein resides in the cytoplasm. The enzyme catalyses tRNA(Val) + L-valine + ATP = L-valyl-tRNA(Val) + AMP + diphosphate. Its function is as follows. Catalyzes the attachment of valine to tRNA(Val). As ValRS can inadvertently accommodate and process structurally similar amino acids such as threonine, to avoid such errors, it has a 'posttransfer' editing activity that hydrolyzes mischarged Thr-tRNA(Val) in a tRNA-dependent manner. The chain is Valine--tRNA ligase from Mannheimia succiniciproducens (strain KCTC 0769BP / MBEL55E).